The sequence spans 444 residues: Tubulin gamma chain (444 aa).

144–150 (SGGTGSG) is a GTP binding site.

The protein belongs to the tubulin family.

The protein localises to the cytoplasm. It localises to the cytoskeleton. It is found in the microtubule organizing center. The protein resides in the centrosome. Its subcellular location is the cell junction. The protein localises to the hemidesmosome. It localises to the adherens junction. Its function is as follows. Tubulin is the major constituent of microtubules. The gamma chain is found at microtubule organizing centers (MTOC) such as the spindle poles or the centrosome, suggesting that it is involved in the minus-end nucleation of microtubule assembly. In Caenorhabditis elegans, this protein is Tubulin gamma chain (tbg-1).